The chain runs to 428 residues: Aerobic C4-dicarboxylate transport protein (428 aa).

The next 9 membrane-spanning stretches (helical) occupy residues 5–27 (LFKSLYFQVLTAIAIGILLGHYY), 47–64 (MIIAPVIFCTVVTGIAGM), 77–99 (ALLYFEIVSTIALIIGLIIVNVV), 141–163 (VIGAFASGNILQVLLFAVLFGFA), 184–206 (VIFGIINMIMRLAPIGAFGAMAF), 216–238 (LVQLGQLIICFYITCILFVVVVL), 289–311 (VVGLVIPTGYSFNLDGTSIYLTM), 326–348 (IFHQITLLVVLLLSSKGAAGVTG), and 353–375 (VLAATISAVGHLPVAGLALILGI).

It belongs to the dicarboxylate/amino acid:cation symporter (DAACS) (TC 2.A.23) family.

It is found in the cell inner membrane. Responsible for the transport of dicarboxylates such as succinate, fumarate, and malate from the periplasm across the inner membrane. In Salmonella typhimurium (strain LT2 / SGSC1412 / ATCC 700720), this protein is Aerobic C4-dicarboxylate transport protein (dctA).